The sequence spans 87 residues: Mitochondrial import inner membrane translocase subunit TIM9 (87 aa).

A Twin CX3C motif motif is present at residues 35–59 (CFSDCVNDFTSSKLTSKEQTCIMRC). Disulfide bonds link C35-C59 and C39-C55.

The protein belongs to the small Tim family. Heterohexamer; composed of 3 copies of TIM9 and 3 copies of TIM10, named soluble 70 kDa complex. Associates with the TIM22 complex, whose core is composed of TIM22 and TIM54. Interacts with the transmembrane regions of multi-pass transmembrane proteins in transit.

It is found in the mitochondrion inner membrane. In terms of biological role, mitochondrial intermembrane chaperone that participates in the import and insertion of multi-pass transmembrane proteins into the mitochondrial inner membrane. Also required for the transfer of beta-barrel precursors from the TOM complex to the sorting and assembly machinery (SAM complex) of the outer membrane. Acts as a chaperone-like protein that protects the hydrophobic precursors from aggregation and guide them through the mitochondrial intermembrane space. The protein is Mitochondrial import inner membrane translocase subunit TIM9 (TIM9) of Eremothecium gossypii (strain ATCC 10895 / CBS 109.51 / FGSC 9923 / NRRL Y-1056) (Yeast).